Reading from the N-terminus, the 581-residue chain is Serine/threonine-protein kinase SSN3 (581 aa).

The disordered stretch occupies residues 34-57 (LWSQQQQQQLLDTKGSASTSKSPM). Over residues 48–57 (GSASTSKSPM) the composition is skewed to polar residues. In terms of domain architecture, Protein kinase spans 85 to 475 (YEIIGYIAAG…AIDALEHEYF (391 aa)). Residues 91-99 (IAAGTYGKV) and Lys-195 contribute to the ATP site. Asp-298 functions as the Proton acceptor in the catalytic mechanism.

This sequence belongs to the protein kinase superfamily. CMGC Ser/Thr protein kinase family. CDC2/CDKX subfamily. As to quaternary structure, component of the SRB8-11 complex, a regulatory module of the Mediator complex. Requires Mg(2+) as cofactor.

The protein resides in the nucleus. It carries out the reaction L-seryl-[protein] + ATP = O-phospho-L-seryl-[protein] + ADP + H(+). The catalysed reaction is L-threonyl-[protein] + ATP = O-phospho-L-threonyl-[protein] + ADP + H(+). The enzyme catalyses [DNA-directed RNA polymerase] + ATP = phospho-[DNA-directed RNA polymerase] + ADP + H(+). Component of the SRB8-11 complex. The SRB8-11 complex is a regulatory module of the Mediator complex which is itself involved in regulation of basal and activated RNA polymerase II-dependent transcription. The SRB8-11 complex may be involved in the transcriptional repression of a subset of genes regulated by Mediator. It may inhibit the association of the Mediator complex with RNA polymerase II to form the holoenzyme complex. The SRB8-11 complex phosphorylates the C-terminal domain (CTD) of the largest subunit of RNA polymerase II. In Eremothecium gossypii (strain ATCC 10895 / CBS 109.51 / FGSC 9923 / NRRL Y-1056) (Yeast), this protein is Serine/threonine-protein kinase SSN3 (SSN3).